A 223-amino-acid polypeptide reads, in one-letter code: Deoxyribose-phosphate aldolase (223 aa).

Aspartate 89 serves as the catalytic Proton donor/acceptor. The active-site Schiff-base intermediate with acetaldehyde is the lysine 152. The active-site Proton donor/acceptor is the lysine 181.

Belongs to the DeoC/FbaB aldolase family. DeoC type 1 subfamily.

It is found in the cytoplasm. The catalysed reaction is 2-deoxy-D-ribose 5-phosphate = D-glyceraldehyde 3-phosphate + acetaldehyde. It participates in carbohydrate degradation; 2-deoxy-D-ribose 1-phosphate degradation; D-glyceraldehyde 3-phosphate and acetaldehyde from 2-deoxy-alpha-D-ribose 1-phosphate: step 2/2. In terms of biological role, catalyzes a reversible aldol reaction between acetaldehyde and D-glyceraldehyde 3-phosphate to generate 2-deoxy-D-ribose 5-phosphate. The chain is Deoxyribose-phosphate aldolase from Listeria monocytogenes serovar 1/2a (strain ATCC BAA-679 / EGD-e).